A 344-amino-acid polypeptide reads, in one-letter code: Protein-glutamate methylesterase/protein-glutamine glutaminase 1 (344 aa).

The 118-residue stretch at R5 to V122 folds into the Response regulatory domain. D56 carries the post-translational modification 4-aspartylphosphate. The 193-residue stretch at F151–R343 folds into the CheB-type methylesterase domain. Active-site residues include S163, H189, and D285.

It belongs to the CheB family. Post-translationally, phosphorylated by CheA. Phosphorylation of the N-terminal regulatory domain activates the methylesterase activity.

The protein localises to the cytoplasm. The enzyme catalyses [protein]-L-glutamate 5-O-methyl ester + H2O = L-glutamyl-[protein] + methanol + H(+). It catalyses the reaction L-glutaminyl-[protein] + H2O = L-glutamyl-[protein] + NH4(+). Its function is as follows. Involved in chemotaxis. Part of a chemotaxis signal transduction system that modulates chemotaxis in response to various stimuli. Catalyzes the demethylation of specific methylglutamate residues introduced into the chemoreceptors (methyl-accepting chemotaxis proteins or MCP) by CheR. Also mediates the irreversible deamidation of specific glutamine residues to glutamic acid. The polypeptide is Protein-glutamate methylesterase/protein-glutamine glutaminase 1 (Caulobacter vibrioides (strain ATCC 19089 / CIP 103742 / CB 15) (Caulobacter crescentus)).